We begin with the raw amino-acid sequence, 446 residues long: Elongation factor Ts, mitochondrial (446 aa).

The transit peptide at 1–33 (MSGSRSALSVVRLAACAKPCTLGSTSSVLTRPF) directs the protein to the mitochondrion.

It belongs to the EF-Ts family.

The protein localises to the mitochondrion. Functionally, associates with the EF-Tu.GDP complex and induces the exchange of GDP to GTP. It remains bound to the aminoacyl-tRNA.EF-Tu.GTP complex up to the GTP hydrolysis stage on the ribosome. The protein is Elongation factor Ts, mitochondrial of Mycosarcoma maydis (Corn smut fungus).